Consider the following 155-residue polypeptide: MFYYIIAFVMICLDQLTKWLIVKNMMLGDSYPVIDGFFYITSHRNSGAAWGILQGQMWFFYVITLVVIAGIVYYLQKHGQKDKLLGVALALMLGGAIGNFIDRVFRQEVVDFAHFVFGNYHYPIFNIADSSLCVGVILLFIQMLLDGKKTKESTT.

The next 2 membrane-spanning stretches (helical) occupy residues 52–72 (ILQG…AGIV) and 85–105 (LGVA…DRVF). Residues Asp111 and Asp129 contribute to the active site. The chain crosses the membrane as a helical span at residues 124-144 (IFNIADSSLCVGVILLFIQML).

This sequence belongs to the peptidase A8 family.

Its subcellular location is the cell membrane. It catalyses the reaction Release of signal peptides from bacterial membrane prolipoproteins. Hydrolyzes -Xaa-Yaa-Zaa-|-(S,diacylglyceryl)Cys-, in which Xaa is hydrophobic (preferably Leu), and Yaa (Ala or Ser) and Zaa (Gly or Ala) have small, neutral side chains.. The protein operates within protein modification; lipoprotein biosynthesis (signal peptide cleavage). This protein specifically catalyzes the removal of signal peptides from prolipoproteins. The sequence is that of Lipoprotein signal peptidase from Bacillus pumilus (strain SAFR-032).